The primary structure comprises 353 residues: uncharacterized protein (353 aa).

The 66-residue stretch at 18–83 folds into the HTH luxR-type domain; sequence NIEFPCLLSE…TLWRDVFLRF (66 aa). Residues 42–61 constitute a DNA-binding region (H-T-H motif); the sequence is VNEISKRRNRSIKTVSCQKM. Residues 98–350 form the EAL domain; it reads NSSVLPVVSS…AFVRKLLASL (253 aa).

This is an uncharacterized protein from Escherichia coli (strain K12).